The sequence spans 528 residues: MKGGETMSVRRSGYKAVVDGVGGRRRREDDMVEIRKAKREESLLKKRREALPHSPSADSLDQKLISCIWSDERDLLIEATTQIRTLLCGEMFNVRVEEVIQAGLVPRFVEFLTWDDSPQLQFEAAWALTNIASGTSENTEVVIDHGAVAILVRLLNSPYDVVREQVVWALGNISGDSPRCRDIVLGHAALPSLLLQLNHGAKLSMLVNAAWTLSNLCRGKPQPPFDQVSAALPALAQLIRLDDKELLAYTCWALVYLSDGSNEKIQAVIEANVCARLIGLSIHRSPSVITPALRTIGNIVTGNDSQTQHIIDLQALPCLVNLLRGSYNKTIRKEACWTVSNITAGCQSQIQAVFDADICPALVNLLQNSEGDVKKEAAWAICNAIAGGSYKQIMFLVKQECIKPLCDLLTCSDTQLVMVCLEALKKILKVGEVFSSRHAEGIYQCPQTNVNPHAQLIEEAEGLEKIEGLQSHENNDIYETAVKILETYWMEEEEEEDQEQQDMIYFPVDNFANMPTSSGTLSEMHCGP.

The 56-residue stretch at 1 to 56 folds into the IBB domain; that stretch reads MKGGETMSVRRSGYKAVVDGVGGRRRREDDMVEIRKAKREESLLKKRREALPHSPS. 8 ARM repeats span residues 93-133, 136-175, 178-218, 220-259, 262-301, 304-344, 347-386, and 390-429; these read NVRV…NIAS, SENT…NISG, PRCR…NLCR, KPQP…YLSD, NEKI…NIVT, DSQT…NITA, QSQI…NAIA, and YKQI…KILK.

This sequence belongs to the importin alpha family. In terms of assembly, forms a complex with importin subunit beta-1.

The protein resides in the nucleus envelope. In terms of biological role, binds to conventional NLS motifs and mediates nuclear protein import across the nuclear envelope. Acts as a cellular receptor for the nuclear import of the virD2 protein of Agrobacterium, but is not essential for Agrobacterium-mediated root transformation. The protein is Importin subunit alpha-7 of Arabidopsis thaliana (Mouse-ear cress).